A 762-amino-acid polypeptide reads, in one-letter code: 5-methyltetrahydropteroyltriglutamate--homocysteine methyltransferase (762 aa).

5-methyltetrahydropteroyltri-L-glutamate is bound by residues 17 to 20 (REWK) and Lys111. L-homocysteine is bound by residues 435 to 437 (IGS) and Glu488. Residues 435 to 437 (IGS) and Glu488 contribute to the L-methionine site. 5-methyltetrahydropteroyltri-L-glutamate is bound by residues 519–520 (RC) and Trp565. Residue Asp603 participates in L-homocysteine binding. Position 603 (Asp603) interacts with L-methionine. Residue Glu609 coordinates 5-methyltetrahydropteroyltri-L-glutamate. Zn(2+)-binding residues include His645, Cys647, and Glu669. His698 serves as the catalytic Proton donor. Residue Cys730 coordinates Zn(2+).

This sequence belongs to the vitamin-B12 independent methionine synthase family. Requires Zn(2+) as cofactor.

It catalyses the reaction 5-methyltetrahydropteroyltri-L-glutamate + L-homocysteine = tetrahydropteroyltri-L-glutamate + L-methionine. The protein operates within amino-acid biosynthesis; L-methionine biosynthesis via de novo pathway; L-methionine from L-homocysteine (MetE route): step 1/1. Functionally, catalyzes the transfer of a methyl group from 5-methyltetrahydrofolate to homocysteine resulting in methionine formation. The polypeptide is 5-methyltetrahydropteroyltriglutamate--homocysteine methyltransferase (Bacillus anthracis (strain A0248)).